The chain runs to 162 residues: Beta-lactoglobulin-1 (162 aa).

2 disulfides stabilise this stretch: Cys-66–Cys-160 and Cys-106–Cys-119.

Belongs to the calycin superfamily. Lipocalin family. In terms of assembly, monomer. In terms of tissue distribution, synthesized in mammary gland and secreted in milk.

The protein localises to the secreted. Functionally, primary component of whey, it binds retinol and is probably involved in the transport of that molecule. The chain is Beta-lactoglobulin-1 (LGB1) from Equus asinus (Donkey).